Here is a 332-residue protein sequence, read N- to C-terminus: Holliday junction branch migration complex subunit RuvB (332 aa).

A large ATPase domain (RuvB-L) region spans residues Met-1–Tyr-181. Residues Leu-20, Arg-21, Gly-62, Lys-65, Thr-66, Thr-67, Glu-128–Phe-130, Arg-171, Tyr-181, and Arg-218 contribute to the ATP site. Mg(2+) is bound at residue Thr-66. The interval Gln-182–Asp-252 is small ATPAse domain (RuvB-S). The interval Arg-255–Thr-332 is head domain (RuvB-H). Arg-291, Arg-310, Arg-312, and Arg-315 together coordinate DNA.

This sequence belongs to the RuvB family. Homohexamer. Forms an RuvA(8)-RuvB(12)-Holliday junction (HJ) complex. HJ DNA is sandwiched between 2 RuvA tetramers; dsDNA enters through RuvA and exits via RuvB. An RuvB hexamer assembles on each DNA strand where it exits the tetramer. Each RuvB hexamer is contacted by two RuvA subunits (via domain III) on 2 adjacent RuvB subunits; this complex drives branch migration. In the full resolvosome a probable DNA-RuvA(4)-RuvB(12)-RuvC(2) complex forms which resolves the HJ.

It is found in the cytoplasm. The enzyme catalyses ATP + H2O = ADP + phosphate + H(+). The RuvA-RuvB-RuvC complex processes Holliday junction (HJ) DNA during genetic recombination and DNA repair, while the RuvA-RuvB complex plays an important role in the rescue of blocked DNA replication forks via replication fork reversal (RFR). RuvA specifically binds to HJ cruciform DNA, conferring on it an open structure. The RuvB hexamer acts as an ATP-dependent pump, pulling dsDNA into and through the RuvAB complex. RuvB forms 2 homohexamers on either side of HJ DNA bound by 1 or 2 RuvA tetramers; 4 subunits per hexamer contact DNA at a time. Coordinated motions by a converter formed by DNA-disengaged RuvB subunits stimulates ATP hydrolysis and nucleotide exchange. Immobilization of the converter enables RuvB to convert the ATP-contained energy into a lever motion, pulling 2 nucleotides of DNA out of the RuvA tetramer per ATP hydrolyzed, thus driving DNA branch migration. The RuvB motors rotate together with the DNA substrate, which together with the progressing nucleotide cycle form the mechanistic basis for DNA recombination by continuous HJ branch migration. Branch migration allows RuvC to scan DNA until it finds its consensus sequence, where it cleaves and resolves cruciform DNA. This is Holliday junction branch migration complex subunit RuvB from Streptococcus pyogenes serotype M18 (strain MGAS8232).